The primary structure comprises 493 residues: N-acetylglucosamine kinase 1 (493 aa).

Positions 27–490 constitute a Hexokinase domain; sequence ESSVLSSIVE…SIIGAAIGAA (464 aa). The segment at 79–221 is hexokinase small subdomain; sequence TGDEHGQYLV…GLTLDVQSIL (143 aa). Positions 222 to 479 are hexokinase large subdomain; it reads NDSLAVYSAG…IKVDLKLIEN (258 aa).

It belongs to the hexokinase family. In terms of assembly, interacts with histone deacetylase SIR2 under filamentation-inducing conditions.

The protein localises to the cytoplasm. The protein resides in the nucleus. Its subcellular location is the mitochondrion. The catalysed reaction is N-acetyl-D-glucosamine + ATP = N-acetyl-D-glucosamine 6-phosphate + ADP + H(+). It catalyses the reaction D-mannose + ATP = D-mannose 6-phosphate + ADP + H(+). The enzyme catalyses D-glucose + ATP = D-glucose 6-phosphate + ADP + H(+). It carries out the reaction D-glucosamine + ATP = D-glucosamine 6-phosphate + ADP + H(+). It functions in the pathway carbohydrate metabolism; hexose metabolism. The protein operates within carbohydrate degradation; glycolysis; D-glyceraldehyde 3-phosphate and glycerone phosphate from D-glucose: step 1/4. Component of the N-acetylglucosamine catabolic cascade that phosphorylates N-acetylglucosamine (GlcNAc), and allows the unique ability to utilise GlcNAc as carbon source. Converts GlcNAc to GlcNAc-6-P. Also able to phosphorylate glucose, glucosamine (GlcN), and mannose. Galactose, fructose, N-acetylmannosamine (ManNAc), mannosamine (ManN), galactosamine (GalN), and N-acetylgalactosamine (GalNAc) are not phosphorylated by HXK1. GlcNAc metabolism is closely associated with virulence and morphogenesis, and is involved in the cell wall synthesis. Acts both as a repressor and an activator of genes involved in maintaining cellular homeostasis. Contributes to white-opaque morphological transition and plays a role as a filamentation repressor. The protein is N-acetylglucosamine kinase 1 of Candida albicans (strain SC5314 / ATCC MYA-2876) (Yeast).